The chain runs to 109 residues: Spermidine export protein MdtI (109 aa).

A run of 4 helical transmembrane segments spans residues 6–26 (FYHI…NILL), 35–55 (VWLG…LAQA), 64–84 (AYAL…WILF), and 88–108 (LNYK…MIKL).

Belongs to the drug/metabolite transporter (DMT) superfamily. Small multidrug resistance (SMR) (TC 2.A.7.1) family. MdtI subfamily. In terms of assembly, forms a complex with MdtJ.

The protein localises to the cell inner membrane. In terms of biological role, catalyzes the excretion of spermidine. The polypeptide is Spermidine export protein MdtI (Yersinia enterocolitica serotype O:8 / biotype 1B (strain NCTC 13174 / 8081)).